A 164-amino-acid polypeptide reads, in one-letter code: MSQSICSTGLRWLWLVVVVLIIDLGSKYLILQNFALGDTVPLFPSLNLHYARNYGAAFSFLADSGGWQRWFFAGIAIGISVILAVMMYRLKATQKLNNIAYALIIGGALGNLFDRLWHGFVVDMIDFYVGDWHFATFNLADTAICVGAALIVLEGFLPSRAKKQ.

Helical transmembrane passes span 12 to 32 (WLWL…LILQ), 70 to 90 (WFFA…MYRL), and 102 to 122 (ALII…GFVV). Active-site residues include D123 and D141. A helical transmembrane segment spans residues 137–157 (FNLADTAICVGAALIVLEGFL).

Belongs to the peptidase A8 family.

The protein localises to the cell inner membrane. It catalyses the reaction Release of signal peptides from bacterial membrane prolipoproteins. Hydrolyzes -Xaa-Yaa-Zaa-|-(S,diacylglyceryl)Cys-, in which Xaa is hydrophobic (preferably Leu), and Yaa (Ala or Ser) and Zaa (Gly or Ala) have small, neutral side chains.. Its pathway is protein modification; lipoprotein biosynthesis (signal peptide cleavage). This protein specifically catalyzes the removal of signal peptides from prolipoproteins. The sequence is that of Lipoprotein signal peptidase from Shigella boydii serotype 4 (strain Sb227).